The chain runs to 242 residues: uncharacterized protein (242 aa).

Residues 1-20 (MTFIKGLPLMLLTISLGCNA) form the signal peptide.

It belongs to the periplasmic pilus chaperone family.

Its subcellular location is the periplasm. Its function is as follows. Could be required for the biogenesis of the putative YbgD fimbria. This is an uncharacterized protein from Escherichia coli (strain K12).